We begin with the raw amino-acid sequence, 385 residues long: Spermidine/putrescine import ATP-binding protein PotA (385 aa).

In terms of domain architecture, ABC transporter spans 27–257; the sequence is ASFRAVSKHY…PANLFVAQFA (231 aa). Residue 59-66 coordinates ATP; that stretch reads GPSGCGKT.

Belongs to the ABC transporter superfamily. Spermidine/putrescine importer (TC 3.A.1.11.1) family. As to quaternary structure, the complex is composed of two ATP-binding proteins (PotA), two transmembrane proteins (PotB and PotC) and a solute-binding protein (PotD).

It localises to the cell inner membrane. The catalysed reaction is ATP + H2O + polyamine-[polyamine-binding protein]Side 1 = ADP + phosphate + polyamineSide 2 + [polyamine-binding protein]Side 1.. Its function is as follows. Part of the ABC transporter complex PotABCD involved in spermidine/putrescine import. Responsible for energy coupling to the transport system. The protein is Spermidine/putrescine import ATP-binding protein PotA of Methylococcus capsulatus (strain ATCC 33009 / NCIMB 11132 / Bath).